Here is a 624-residue protein sequence, read N- to C-terminus: tRNA uridine 5-carboxymethylaminomethyl modification enzyme MnmG (624 aa).

FAD-binding positions include 13-18, Val125, and Ser180; that span reads GGGHAG. NAD(+) is bound at residue 273–287; that stretch reads GPRYCPSIEDKIVRF. FAD is bound at residue Gln370.

It belongs to the MnmG family. As to quaternary structure, homodimer. Heterotetramer of two MnmE and two MnmG subunits. It depends on FAD as a cofactor.

The protein resides in the cytoplasm. Functionally, NAD-binding protein involved in the addition of a carboxymethylaminomethyl (cmnm) group at the wobble position (U34) of certain tRNAs, forming tRNA-cmnm(5)s(2)U34. In Legionella pneumophila (strain Paris), this protein is tRNA uridine 5-carboxymethylaminomethyl modification enzyme MnmG.